We begin with the raw amino-acid sequence, 207 residues long: Imidazoleglycerol-phosphate dehydratase (207 aa).

It belongs to the imidazoleglycerol-phosphate dehydratase family.

It localises to the cytoplasm. It carries out the reaction D-erythro-1-(imidazol-4-yl)glycerol 3-phosphate = 3-(imidazol-4-yl)-2-oxopropyl phosphate + H2O. It participates in amino-acid biosynthesis; L-histidine biosynthesis; L-histidine from 5-phospho-alpha-D-ribose 1-diphosphate: step 6/9. This is Imidazoleglycerol-phosphate dehydratase (hisB) from Azospirillum brasilense.